A 416-amino-acid chain; its full sequence is Imidazolonepropionase (416 aa).

2 residues coordinate Fe(3+): His-81 and His-83. The Zn(2+) site is built by His-81 and His-83. Residues Arg-90, Tyr-153, and His-186 each coordinate 4-imidazolone-5-propanoate. Tyr-153 contributes to the N-formimidoyl-L-glutamate binding site. Position 251 (His-251) interacts with Fe(3+). Residue His-251 participates in Zn(2+) binding. Gln-254 provides a ligand contact to 4-imidazolone-5-propanoate. Asp-326 is a binding site for Fe(3+). Asp-326 is a binding site for Zn(2+). Residues Asn-328 and Gly-330 each coordinate N-formimidoyl-L-glutamate. Thr-331 serves as a coordination point for 4-imidazolone-5-propanoate.

This sequence belongs to the metallo-dependent hydrolases superfamily. HutI family. The cofactor is Zn(2+). Fe(3+) serves as cofactor.

The protein resides in the cytoplasm. It catalyses the reaction 4-imidazolone-5-propanoate + H2O = N-formimidoyl-L-glutamate. It participates in amino-acid degradation; L-histidine degradation into L-glutamate; N-formimidoyl-L-glutamate from L-histidine: step 3/3. Its function is as follows. Catalyzes the hydrolytic cleavage of the carbon-nitrogen bond in imidazolone-5-propanoate to yield N-formimidoyl-L-glutamate. It is the third step in the universal histidine degradation pathway. This chain is Imidazolonepropionase, found in Paracidovorax citrulli (strain AAC00-1) (Acidovorax citrulli).